Here is a 498-residue protein sequence, read N- to C-terminus: Protein flp (498 aa).

Transmembrane regions (helical) follow at residues 6 to 26 (LYFL…IYIT), 389 to 409 (FNIV…FSAY), 433 to 453 (LSLC…YLIL), and 471 to 491 (LALI…LLFL).

It localises to the cell membrane. Its precise function is unknown. Has no penicillin-binding activity and is not involved in methicillin resistance. This chain is Protein flp (flp), found in Staphylococcus aureus (strain COL).